The following is a 115-amino-acid chain: U3-lycotoxin-Ls1b (115 aa).

The N-terminal stretch at 1 to 20 (MKFVLLFGVLLVTLFSYSSA) is a signal peptide. The propeptide occupies 21 to 44 (EMLDDFDQADEDELLSLIEKEEAR). Disulfide bonds link C48–C63, C55–C72, C62–C87, and C74–C85.

This sequence belongs to the neurotoxin 19 (CSTX) family. 01 subfamily. In terms of tissue distribution, expressed by the venom gland.

The protein localises to the secreted. The sequence is that of U3-lycotoxin-Ls1b from Lycosa singoriensis (Wolf spider).